A 504-amino-acid polypeptide reads, in one-letter code: MLRVRKRRAAPQDIYPACKVANNCPPDIQNKIEQTTVADKILQYGSLGIFLGGLGIGTGKGGGGRYGYTPLGDSGAVRVGGRSTPVRPTVPVETVGPRDILPIDSLDPLGPSVIELEDIPATTVEVVAEVHPISDTPQIPAPTTDESSSAVLHIPQESPAARTITRSQYNNPLFRITASADIASGEASASDNIFIDVDTPGQIVGQEIPLVNFDMGPISTEGELETEFTTSTPRTTQVQERPTRFYNRRYYEQVPVTAPEFITRPASLVTFENPAFERSVSLIFEQDLEDILNAPDQDFRDIVYLSRPTYSRAPDGRMRLSRLGRRATISTRSGVTIGAQSHFYMDISSISSNDGIELQTLGEASGETVVQSSLAASDPIEAEHSFIEPAPSIDSYDIVSLQSETYSDEHLLDMYEPVGSSLQLQISDVRGRPTVIDIPFRPRRPPLGPINAGVDIYSPTASVGSPTINPTDLDIPLIIIHLDNSTGDYDLHPSLRKRRKLVHI.

The Nuclear localization signal signature appears at 1–9 (MLRVRKRRA). C18 and C24 are disulfide-bonded. The Nuclear localization signal signature appears at 497 to 504 (KRRKLVHI).

It belongs to the papillomaviridae L2 protein family. As to quaternary structure, interacts with major capsid protein L1. Interacts with E2; this interaction inhibits E2 transcriptional activity but not the DNA replication function E2. Interacts with host GADD45GIP1. Interacts with host HSPA8; this interaction is required for L2 nuclear translocation. Interacts with host importins KPNB2 and KPNB3. Forms a complex with importin alpha2-beta1 heterodimers via interaction with the importin alpha2 adapter. Interacts with host DYNLT1; this interaction is essential for virus intracellular transport during entry. Interacts (via C-terminus) with host retromer subunits VPS35 and VPS29. Post-translationally, highly phosphorylated.

It is found in the virion. The protein resides in the host nucleus. It localises to the host early endosome. Its subcellular location is the host Golgi apparatus. Functionally, minor protein of the capsid that localizes along the inner surface of the virion, within the central cavities beneath the L1 pentamers. Plays a role in capsid stabilization through interaction with the major capsid protein L1. Once the virion enters the host cell, L2 escorts the genomic DNA into the nucleus by promoting escape from the endosomal compartments and traffic through the host Golgi network. Mechanistically, the C-terminus of L2 possesses a cell-penetrating peptide that protudes from the host endosome, interacts with host cytoplasmic retromer cargo and thereby mediates the capsid delivery to the host trans-Golgi network. Plays a role through its interaction with host dynein in the intracellular microtubule-dependent transport of viral capsid toward the nucleus. Mediates the viral genome import into the nucleus through binding to host importins. Once within the nucleus, L2 localizes viral genomes to host PML bodies in order to activate early gene expression for establishment of infection. Later on, promotes late gene expression by interacting with the viral E2 protein and by inhibiting its transcriptional activation functions. During virion assembly, encapsidates the genome by direct interaction with the viral DNA. The polypeptide is Minor capsid protein L2 (Homo sapiens (Human)).